Reading from the N-terminus, the 258-residue chain is Indole-3-glycerol phosphate synthase (258 aa).

The protein belongs to the TrpC family.

It carries out the reaction 1-(2-carboxyphenylamino)-1-deoxy-D-ribulose 5-phosphate + H(+) = (1S,2R)-1-C-(indol-3-yl)glycerol 3-phosphate + CO2 + H2O. Its pathway is amino-acid biosynthesis; L-tryptophan biosynthesis; L-tryptophan from chorismate: step 4/5. The sequence is that of Indole-3-glycerol phosphate synthase from Endomicrobium trichonymphae.